The chain runs to 534 residues: Alkaline serine exoprotease A (534 aa).

An N-terminal signal peptide occupies residues 1 to 21; sequence MLKKLLSCCITSALCFHSSLA. The propeptide occupies 22-141; that stretch reads FSQPNEIADS…LSLDPIVSAD (120 aa). Residues 57–134 enclose the Inhibitor I9 domain; sequence RYIVVFQQPQ…YIEQDRILSL (78 aa). In terms of domain architecture, Peptidase S8 spans 148 to 419; sequence IWGLDRIDQR…KLLYSLTDAD (272 aa). Residues D180, H213, and S363 each act as charge relay system in the active site. The disordered stretch occupies residues 423–442; that stretch reads DCGGPDPTPDPEGKLTSGVP.

It belongs to the peptidase S8 family.

The polypeptide is Alkaline serine exoprotease A (proA) (Vibrio alginolyticus).